A 299-amino-acid polypeptide reads, in one-letter code: GTPase Era (299 aa).

Residues 4-171 (KSGFVAILGR…VDILSENLDE (168 aa)) enclose the Era-type G domain. The tract at residues 12–19 (GRPNVGKS) is G1. Residue 12 to 19 (GRPNVGKS) participates in GTP binding. The tract at residues 38–42 (QTTRN) is G2. Residues 59 to 62 (DTPG) are G3. GTP contacts are provided by residues 59–63 (DTPGI) and 121–124 (NKID). Residues 121-124 (NKID) are G4. The tract at residues 150-152 (ISA) is G5. The KH type-2 domain occupies 202–280 (TREEIPHSVA…FLETWVKVKK (79 aa)).

Belongs to the TRAFAC class TrmE-Era-EngA-EngB-Septin-like GTPase superfamily. Era GTPase family. Monomer.

It localises to the cytoplasm. The protein localises to the cell membrane. Its function is as follows. An essential GTPase that binds both GDP and GTP, with rapid nucleotide exchange. Plays a role in 16S rRNA processing and 30S ribosomal subunit biogenesis and possibly also in cell cycle regulation and energy metabolism. The chain is GTPase Era from Streptococcus pneumoniae (strain P1031).